The following is a 447-amino-acid chain: Dihydroorotase (447 aa).

Residues H84 and H86 each contribute to the Zn(2+) site. Substrate is bound by residues 86-88 and N118; that span reads HLR. D174, H201, and H255 together coordinate Zn(2+). N301 lines the substrate pocket. D328 contacts Zn(2+). D328 is a catalytic residue. Substrate is bound by residues H332 and 346-347; that span reads FG.

It belongs to the metallo-dependent hydrolases superfamily. DHOase family. Class I DHOase subfamily. The cofactor is Zn(2+).

It catalyses the reaction (S)-dihydroorotate + H2O = N-carbamoyl-L-aspartate + H(+). It functions in the pathway pyrimidine metabolism; UMP biosynthesis via de novo pathway; (S)-dihydroorotate from bicarbonate: step 3/3. Functionally, catalyzes the reversible cyclization of carbamoyl aspartate to dihydroorotate. The chain is Dihydroorotase from Anaplasma phagocytophilum (strain HZ).